Consider the following 366-residue polypeptide: 8-hydroxyquercetin 8-O-methyltransferase (366 aa).

S-adenosyl-L-methionine contacts are provided by residues 207–210 (VGGG), 231–232 (DL), 251–252 (DM), and Lys265. The Proton acceptor role is filled by His269.

Belongs to the class I-like SAM-binding methyltransferase superfamily. Cation-independent O-methyltransferase family. COMT subfamily. In terms of assembly, homodimer.

The enzyme catalyses 3,3',4',5,7,8-hexahydroxyflavone + S-adenosyl-L-methionine = 3,3',4',5,7-pentahydroxy-8-methoxyflavone + S-adenosyl-L-homocysteine + H(+). It carries out the reaction 4',7,8-trihydroxyflavone + S-adenosyl-L-methionine = 4',7-dihydroxy-8-methoxyflavone + S-adenosyl-L-homocysteine + H(+). The catalysed reaction is 8-hydroxy-7-methoxyflavone + S-adenosyl-L-methionine = 7,8-dimethoxyflavone + S-adenosyl-L-homocysteine + H(+). The protein operates within flavonoid metabolism. In terms of biological role, flavonoid 8-O-methyltransferase involved in the biosynthesis of polymethoxylated flavonoids natural products such as pebrellin, aroma compounds which contribute to the flavor of peppermint, and exhibit pharmacological activities such as anti-allergic, anti-oxidant, antibacterial, anti-proliferative, and anti-inflammatory effects. Catalyzes S-adenosylmethionine-dependent regioselective 8-O-methylation of flavonoids; active on various hydroxylated flavonoid substrates, including 7,8,3'4'-tetrahydroxy-flavone, 7,8,4'-trihydroxy-flavone and 8-hydroxy-flavone 7-methyl ether. In Mentha piperita (Peppermint), this protein is 8-hydroxyquercetin 8-O-methyltransferase.